The primary structure comprises 1127 residues: Cellulose synthase-like protein D1 (1127 aa).

The disordered stretch occupies residues 1–24 (MASKGILKNGGKPPTAPSSAAPTV). The next 2 membrane-spanning stretches (helical) occupy residues 262 to 282 (VISP…LFLM) and 292 to 312 (AIWL…SWVL). Catalysis depends on residues Asp-392 and Asp-828. The next 6 membrane-spanning stretches (helical) occupy residues 910-930 (VFLI…QFIV), 936-956 (TFLT…MLEI), 982-1002 (LAAV…SFTL), 1025-1045 (SLMI…AVGF), 1059-1079 (LLGG…FAKG), and 1089-1109 (TIVY…WIAI).

The protein belongs to the glycosyltransferase 2 family. Plant cellulose synthase-like D subfamily.

The protein resides in the golgi apparatus membrane. Functionally, thought to be a Golgi-localized beta-glycan synthase that polymerize the backbones of noncellulosic polysaccharides (hemicelluloses) of plant cell wall. In Oryza sativa subsp. indica (Rice), this protein is Cellulose synthase-like protein D1 (CSLD1).